The primary structure comprises 951 residues: Protocadherin-20 (951 aa).

An N-terminal signal peptide occupies residues 1–60 (MRGRGNARSSQALGVSWCPATWHPRLDMGRLHRPRSSTSYRNLPHLFLFFLFVGPFSCLG). The Extracellular portion of the chain corresponds to 61-890 (SYSRATELLY…VESVSCMPTL (830 aa)). Cadherin domains follow at residues 64–209 (RATE…APQF), 210–320 (PVSQ…CPLF), 321–535 (TDSQ…APIF), 536–639 (LQPL…SPRF), 640–742 (INKD…PPLV), and 746–863 (QSNM…EPEI). Asn135 is a glycosylation site (N-linked (GlcNAc...) asparagine). N-linked (GlcNAc...) asparagine glycosylation is found at Asn326 and Asn332. N-linked (GlcNAc...) asparagine glycosylation is found at Asn680, Asn748, Asn803, Asn844, and Asn849. A helical membrane pass occupies residues 891 to 911 (VALSVISLGSITLVTGMGIYI). Residues 912–951 (CLRKGEKHPREDENLEVQIPLKGKIDLHMRERKPMDISNI) are Cytoplasmic-facing.

The protein localises to the cell membrane. Its function is as follows. Potential calcium-dependent cell-adhesion protein. In Homo sapiens (Human), this protein is Protocadherin-20 (PCDH20).